A 54-amino-acid chain; its full sequence is U-reduvitoxin-Pr7a (54 aa).

Residues methionine 1–alanine 23 form the signal peptide. 3 disulfides stabilise this stretch: cysteine 26–cysteine 41, cysteine 33–cysteine 46, and cysteine 40–cysteine 53.

It belongs to the venom Ptu1-like knottin family. In terms of tissue distribution, expressed by the venom gland.

The protein localises to the secreted. Binds reversibly and blocks P/Q-type voltage-gated calcium channels (Cav). The sequence is that of U-reduvitoxin-Pr7a from Platymeris rhadamanthus (Red spot assassin bug).